Reading from the N-terminus, the 237-residue chain is ATP synthase subunit a (237 aa).

5 helical membrane-spanning segments follow: residues 18-38, 77-97, 114-134, 167-187, and 208-230; these read LTLL…VYWA, SLFL…GLMA, NIAF…VEGI, LALR…LLVT, and AFSV…MYLG.

Belongs to the ATPase A chain family. As to quaternary structure, F-type ATPases have 2 components, CF(1) - the catalytic core - and CF(0) - the membrane proton channel. CF(1) has five subunits: alpha(3), beta(3), gamma(1), delta(1), epsilon(1). CF(0) has three main subunits: a(1), b(2) and c(9-12). The alpha and beta chains form an alternating ring which encloses part of the gamma chain. CF(1) is attached to CF(0) by a central stalk formed by the gamma and epsilon chains, while a peripheral stalk is formed by the delta and b chains.

It is found in the cell membrane. Its function is as follows. Key component of the proton channel; it plays a direct role in the translocation of protons across the membrane. In Streptococcus gordonii (strain Challis / ATCC 35105 / BCRC 15272 / CH1 / DL1 / V288), this protein is ATP synthase subunit a.